The sequence spans 586 residues: SPbeta prophage-derived uncharacterized protein YorA (586 aa).

PbH1 repeat units follow at residues 108–147 (AENV…HVHG), 148–170 (SKNV…WIAA), 184–206 (SKSV…ATNG), 207–235 (CEGL…DLEG), 246–268 (PYEL…TAHT), 288–313 (STDV…DSVG), 320–341 (GNRI…MIRG), 364–384 (AEDV…QIQV), 387–410 (SSDI…KVMD), 411–432 (SNDV…YCER), 435–456 (AVRI…YWDK), 481–504 (MYNI…HLIG), and 505–531 (GSEH…YLNG).

This chain is SPbeta prophage-derived uncharacterized protein YorA (yorA), found in Bacillus subtilis (strain 168).